The sequence spans 487 residues: Cytochrome P450 2C5 (487 aa).

Cysteine 432 contributes to the heme binding site.

It belongs to the cytochrome P450 family. It depends on heme as a cofactor.

It localises to the endoplasmic reticulum membrane. Its subcellular location is the microsome membrane. It catalyses the reaction an organic molecule + reduced [NADPH--hemoprotein reductase] + O2 = an alcohol + oxidized [NADPH--hemoprotein reductase] + H2O + H(+). In terms of biological role, cytochromes P450 are a group of heme-thiolate monooxygenases. In liver microsomes, this enzyme is involved in an NADPH-dependent electron transport pathway. It oxidizes a variety of structurally unrelated compounds, including steroids, fatty acids, and xenobiotics. This Oryctolagus cuniculus (Rabbit) protein is Cytochrome P450 2C5 (CYP2C5).